Here is a 349-residue protein sequence, read N- to C-terminus: 5,10-methylenetetrahydromethanopterin reductase (349 aa).

The protein belongs to the mer family. As to quaternary structure, homotetramer composed of two loosely associated dimers.

It is found in the cytoplasm. It carries out the reaction 5-methyl-5,6,7,8-tetrahydromethanopterin + oxidized coenzyme F420-(gamma-L-Glu)(n) + H(+) = 5,10-methylenetetrahydromethanopterin + reduced coenzyme F420-(gamma-L-Glu)(n). Its pathway is one-carbon metabolism; methanogenesis from CO(2); methyl-coenzyme M from 5,10-methylene-5,6,7,8-tetrahydromethanopterin: step 1/2. Its activity is regulated as follows. Requires the presence of relatively high concentrations of either sulfate or phosphate for maximal activity. In terms of biological role, catalyzes the reversible reduction of methylene-H(4)MPT to methyl-H(4)MPT. This Methanopyrus kandleri (strain AV19 / DSM 6324 / JCM 9639 / NBRC 100938) protein is 5,10-methylenetetrahydromethanopterin reductase.